The chain runs to 103 residues: Co-chaperonin GroES (103 aa).

It belongs to the GroES chaperonin family. As to quaternary structure, heptamer of 7 subunits arranged in a ring. Interacts with the chaperonin GroEL.

It is found in the cytoplasm. Functionally, together with the chaperonin GroEL, plays an essential role in assisting protein folding. The GroEL-GroES system forms a nano-cage that allows encapsulation of the non-native substrate proteins and provides a physical environment optimized to promote and accelerate protein folding. GroES binds to the apical surface of the GroEL ring, thereby capping the opening of the GroEL channel. In Rippkaea orientalis (strain PCC 8801 / RF-1) (Cyanothece sp. (strain PCC 8801)), this protein is Co-chaperonin GroES.